A 513-amino-acid polypeptide reads, in one-letter code: 2-isopropylmalate synthase (513 aa).

The Pyruvate carboxyltransferase domain maps to 4 to 266 (IEFFDTSLRD…KSPLVLAETM (263 aa)). The Mn(2+) site is built by D13, H201, H203, and N237. The segment at 390–513 (ILNNVQIDGH…VEQISAHDGI (124 aa)) is regulatory domain.

This sequence belongs to the alpha-IPM synthase/homocitrate synthase family. LeuA type 1 subfamily. Homodimer. Mn(2+) is required as a cofactor.

It localises to the cytoplasm. The enzyme catalyses 3-methyl-2-oxobutanoate + acetyl-CoA + H2O = (2S)-2-isopropylmalate + CoA + H(+). Its pathway is amino-acid biosynthesis; L-leucine biosynthesis; L-leucine from 3-methyl-2-oxobutanoate: step 1/4. Its function is as follows. Catalyzes the condensation of the acetyl group of acetyl-CoA with 3-methyl-2-oxobutanoate (2-ketoisovalerate) to form 3-carboxy-3-hydroxy-4-methylpentanoate (2-isopropylmalate). The polypeptide is 2-isopropylmalate synthase (Lactococcus lactis subsp. cremoris (strain SK11)).